The following is a 198-amino-acid chain: Fimbriae W protein (198 aa).

The HTH luxR-type domain maps to 127–192 (HYCTTRHFSV…QFLKYIRVNL (66 aa)).

The protein localises to the fimbrium. The chain is Fimbriae W protein (fimW) from Salmonella typhimurium (strain LT2 / SGSC1412 / ATCC 700720).